Here is a 533-residue protein sequence, read N- to C-terminus: Probable galacturonosyltransferase 13 (533 aa).

At 1–40 (MQLHISPSMRSITISSSNEFIDLMKIKVAARHISYRTLFH) the chain is on the cytoplasmic side. Residues 41-61 (TILILAFLLPFVFILTAVVTL) traverse the membrane as a helical; Signal-anchor for type II membrane protein segment. Residues 62 to 533 (EGVNKCSSFD…DFIKNCHILE (472 aa)) lie on the Lumenal side of the membrane. Asn306, Asn396, Asn445, and Asn520 each carry an N-linked (GlcNAc...) asparagine glycan.

Belongs to the glycosyltransferase 8 family. In terms of tissue distribution, expressed in roots, inflorescences, siliques, leaves and stems. Accumulates in pollen grains.

The protein localises to the golgi apparatus membrane. It functions in the pathway glycan metabolism; pectin biosynthesis. Its function is as follows. May be involved in pectin and/or xylans biosynthesis in cell walls. Together with GAUT14, required for pollen tube growth, possibly through the regulation of pectin biosynthesis and repartition in the pollen tube wall. This chain is Probable galacturonosyltransferase 13, found in Arabidopsis thaliana (Mouse-ear cress).